Reading from the N-terminus, the 43-residue chain is Protein PsbN (43 aa).

Residues 7-27 (VAIFISCLLVSFTGYALYTAF) form a helical membrane-spanning segment.

The protein belongs to the PsbN family.

The protein resides in the plastid. The protein localises to the chloroplast thylakoid membrane. May play a role in photosystem I and II biogenesis. This is Protein PsbN from Zygnema circumcarinatum (Green alga).